Here is a 683-residue protein sequence, read N- to C-terminus: ATP-dependent zinc metalloprotease FtsH 2 (683 aa).

The segment covering 1-12 has biased composition (polar residues); the sequence is MADQTSQNDNQN. The interval 1–21 is disordered; that stretch reads MADQTSQNDNQNGSGLPGGGP. At 1 to 28 the chain is on the cytoplasmic side; it reads MADQTSQNDNQNGSGLPGGGPSGTGRGR. Residues 29-49 form a helical membrane-spanning segment; it reads LIIWVIAGTLLALWAYSYWGM. Over 50 to 136 the chain is Periplasmic; the sequence is GASGGERISY…VTKPESSFPW (87 aa). Residues 137–157 form a helical membrane-spanning segment; the sequence is GLVIMGLLPVLLLFGVGYIFL. At 158-683 the chain is on the cytoplasmic side; that stretch reads RRMQSQGQGL…ASGSADASGS (526 aa). 228 to 235 is an ATP binding site; sequence GPPGTGKT. H450 contributes to the Zn(2+) binding site. Residue E451 is part of the active site. Positions 454 and 526 each coordinate Zn(2+). The interval 627–683 is disordered; the sequence is VNGDTDEIGHMPTTNGAAASEENGSADDHEPDEATVIEEDGESGEGRASGSADASGS. The segment covering 655 to 669 has biased composition (acidic residues); the sequence is HEPDEATVIEEDGES. Over residues 672–683 the composition is skewed to low complexity; the sequence is GRASGSADASGS.

In the central section; belongs to the AAA ATPase family. This sequence in the C-terminal section; belongs to the peptidase M41 family. In terms of assembly, homohexamer. It depends on Zn(2+) as a cofactor.

The protein localises to the cell inner membrane. Its function is as follows. Acts as a processive, ATP-dependent zinc metallopeptidase for both cytoplasmic and membrane proteins. Plays a role in the quality control of integral membrane proteins. The polypeptide is ATP-dependent zinc metalloprotease FtsH 2 (Salinibacter ruber (strain M8)).